We begin with the raw amino-acid sequence, 2016 residues long: Sodium channel protein type 5 subunit alpha (2016 aa).

The Cytoplasmic segment spans residues 1–129; the sequence is MANFLLPRGT…IRRAAVKILV (129 aa). Positions 28–56 are disordered; the sequence is MAEKQARGSTTLQESREGLPEEEAPRPQL. Ser-36 is subject to Phosphoserine. Thr-38 bears the Phosphothreonine mark. The segment covering 41–52 has biased composition (basic and acidic residues); that stretch reads ESREGLPEEEAP. An I repeat occupies 113–420; sequence VLSPFHPIRR…VVAMAYEEQN (308 aa). The chain crosses the membrane as a helical span at residues 130–149; it reads HSLFNMLIMCTILTNCVFMA. The Extracellular portion of the chain corresponds to 150 to 157; that stretch reads QHDPPPWT. Residues 158 to 179 traverse the membrane as a helical segment; the sequence is KYVEYTFTAIYTFESLVKILAR. Over 180 to 188 the chain is Cytoplasmic; sequence GFCLHAFTF. Residues 189-209 form a helical membrane-spanning segment; that stretch reads LRDPWNWLDFSVIIMAYTTEF. Residues 210–216 lie on the Extracellular side of the membrane; sequence VDLGNVS. Asn-214 carries N-linked (GlcNAc...) asparagine glycosylation. The helical transmembrane segment at 217 to 236 threads the bilayer; that stretch reads ALRTFRVLRALKTISVISGL. Residues 237–249 are Cytoplasmic-facing; that stretch reads KTIVGALIQSVKK. Residues 250-272 form a helical membrane-spanning segment; the sequence is LADVMVLTVFCLSVFALIGLQLF. Residues 273–357 lie on the Extracellular side of the membrane; sequence MGNLRHKCVR…PDHGYTSFDS (85 aa). Cys-280 and Cys-335 form a disulfide bridge. Residues Asn-283, Asn-288, Asn-291, Asn-318, and Asn-328 are each glycosylated (N-linked (GlcNAc...) asparagine). The pore-forming intramembrane region spans 358-378; that stretch reads FAWAFLALFRLMTQDCWERLY. The Extracellular portion of the chain corresponds to 379 to 386; it reads QQTLRSAG. A helical transmembrane segment spans residues 387 to 413; the sequence is KIYMIFFMLVIFLGSFYLVNLILAVVA. At 414–719 the chain is on the cytoplasmic side; sequence MAYEEQNQAT…VKLVVMDPFT (306 aa). Phosphoserine is present on residues Ser-457, Ser-460, Ser-483, and Ser-484. The segment at 461-591 is disordered; it reads LEMSPLAPVN…APGHALHGKK (131 aa). Phosphothreonine is present on Thr-486. A compositionally biased stretch (basic and acidic residues) spans 491–503; that stretch reads EDRLPKSDSEDGP. Residues Ser-497 and Ser-510 each carry the phosphoserine modification. Residues 509-528 show a composition bias toward polar residues; the sequence is LSLTRGLSRTSMKPRSSRGS. Arg-513 and Arg-526 each carry dimethylated arginine; alternate. An omega-N-methylarginine; alternate mark is found at Arg-513 and Arg-526. Phosphoserine occurs at positions 539, 571, 664, and 667. Residues 570 to 580 are compositionally biased toward polar residues; the sequence is TSAQGQPSPGT. Arg-680 carries the post-translational modification Dimethylated arginine; alternate. Arg-680 is modified (omega-N-methylarginine; alternate). The II repeat unit spans residues 699 to 969; that stretch reads CCPLWMSIKQ…QLALARIQRG (271 aa). Residues 720–737 form a helical membrane-spanning segment; sequence DLTITMCIVLNTLFMALE. Residues 738-746 lie on the Extracellular side of the membrane; the sequence is HYNMTSEFE. A glycan (N-linked (GlcNAc...) asparagine) is linked at Asn-740. Residues 747 to 769 traverse the membrane as a helical segment; the sequence is EMLQVGNLVFTGIFTAEMTFKII. At 770–775 the chain is on the cytoplasmic side; the sequence is ALDPYY. The helical transmembrane segment at 776-796 threads the bilayer; sequence YFQQGWNIFDSIIVILSLMEL. Residues 797–806 are Extracellular-facing; the sequence is GLSRMSNLSV. Residue Asn-803 is glycosylated (N-linked (GlcNAc...) asparagine). The chain crosses the membrane as a helical span at residues 807–821; the sequence is LRSFRLLRVFKLAKS. The Cytoplasmic segment spans residues 822 to 838; that stretch reads WPTLNTLIKIIGNSVGA. The helical transmembrane segment at 839-860 threads the bilayer; it reads LGNLTLVLAIIVFIFAVVGMQL. The Extracellular segment spans residues 861 to 884; the sequence is FGKNYSELRDSDSGLLPRWHMMDF. Asn-864 carries N-linked (GlcNAc...) asparagine glycosylation. An intramembrane region (pore-forming) is located at residues 885–903; it reads FHAFLIIFRILCGEWIETM. At 904–912 the chain is on the extracellular side; sequence WDCMEVSGQ. Residues Cys-906 and Cys-915 are joined by a disulfide bond. A helical transmembrane segment spans residues 913 to 941; that stretch reads SLCLLVFLLVMVIGNLVVLNLFLALLLSS. The Cytoplasmic portion of the chain corresponds to 942 to 1203; that stretch reads FSADNLTAPD…LRKTCYHIVE (262 aa). Positions 1005–1141 are disordered; it reads IATPYSPPPP…PEDSCSEGST (137 aa). The segment covering 1015–1030 has biased composition (basic and acidic residues); it reads ETEKVPPTRKETRFEE. A compositionally biased stretch (low complexity) spans 1033 to 1044; the sequence is QPGQGTPGDPEP. A compositionally biased stretch (acidic residues) spans 1054-1071; sequence SDTDDQEEDEENSLGTEE. Positions 1096–1113 are enriched in low complexity; it reads SQVSATASSEAEASASQA. One copy of the III repeat lies at 1187–1501; the sequence is PGKVWWRLRK…KKYYNAMKKL (315 aa). Residues 1204 to 1225 traverse the membrane as a helical segment; the sequence is HSWFETFIIFMILLSSGALAFE. Residues 1226-1236 lie on the Extracellular side of the membrane; the sequence is DIYLEERKTIK. The chain crosses the membrane as a helical span at residues 1237–1259; sequence VLLEYADKMFTYVFVLEMLLKWV. Residues 1260 to 1268 are Cytoplasmic-facing; it reads AYGFKKYFT. The chain crosses the membrane as a helical span at residues 1269-1291; the sequence is NAWCWLDFLIVDVSLVSLVANTL. The Extracellular portion of the chain corresponds to 1292-1297; that stretch reads GFAEMG. Residues 1298–1317 form a helical membrane-spanning segment; it reads PIKSLRTLRALRPLRALSRF. Over 1318–1330 the chain is Cytoplasmic; it reads EGMRVVVNALVGA. A helical membrane pass occupies residues 1331-1355; it reads IPSIMNVLLVCLIFWLIFSIMGVNL. The Extracellular segment spans residues 1356–1400; it reads FAGKFGRCINQTEGDLPLNYTIVNNKSQCESLNLTGELYWTKVKV. Residues Asn-1365, Asn-1374, Asn-1380, and Asn-1388 are each glycosylated (N-linked (GlcNAc...) asparagine). The pore-forming intramembrane region spans 1401–1422; it reads NFDNVGAGYLALLQVATFKGWM. Over 1423–1445 the chain is Extracellular; the sequence is DIMYAAVDSRGYEEQPQWEYNLY. The helical transmembrane segment at 1446–1470 threads the bilayer; that stretch reads MYIYFVIFIIFGSFFTLNLFIGVII. The Cytoplasmic portion of the chain corresponds to 1471-1528; that stretch reads DNFNQQKKKLGGQDIFMTEEQKKYYNAMKKLGSKKPQKPIPRPLNKYQGFIFDIVTKQ. Ser-1503 carries the post-translational modification Phosphoserine; by PKC. The stretch at 1510–1807 is one IV repeat; sequence IPRPLNKYQG…WEKFDPEATQ (298 aa). The chain crosses the membrane as a helical span at residues 1529–1547; the sequence is AFDVTIMFLICLNMVTMMV. Residues 1548 to 1558 lie on the Extracellular side of the membrane; sequence ETDDQSPEKIN. The chain crosses the membrane as a helical span at residues 1559–1580; it reads ILAKINLLFVAIFTGECIVKLA. Over 1581-1589 the chain is Cytoplasmic; sequence ALRHYYFTN. The chain crosses the membrane as a helical span at residues 1590–1612; the sequence is SWNIFDFVVVILSIVGTVLSDII. Residues 1613-1619 lie on the Extracellular side of the membrane; the sequence is QKYFFSP. Residues 1620 to 1640 form a helical membrane-spanning segment; that stretch reads TLFRVIRLARIGRILRLIRGA. The Cytoplasmic segment spans residues 1641–1650; the sequence is KGIRTLLFAL. Residues 1651-1679 traverse the membrane as a helical segment; the sequence is MMSLPALFNIGLLLFLVMFIYSIFGMANF. Topologically, residues 1680 to 1697 are extracellular; sequence AYVKWEAGIDDMFNFQTF. The segment at residues 1698 to 1714 is an intramembrane region (pore-forming); the sequence is ANSMLCLFQITTSAGWD. Over 1715-1745 the chain is Extracellular; the sequence is GLLSPILNTGPPYCDPTLPNSNGSRGDCGSP. N-linked (GlcNAc...) asparagine glycosylation occurs at Asn-1736. The chain crosses the membrane as a helical span at residues 1746–1771; it reads AVGILFFTTYIIISFLIVVNMYIAII. The Cytoplasmic segment spans residues 1772–2016; the sequence is LENFSVATEE…SPDRDRESIV (245 aa). Residues 1839 to 1901 are interaction with FGF13; it reads DLPMVSGDRI…ITTTLRRKHE (63 aa). The region spanning 1901-1930 is the IQ domain; it reads EEVSAMVIQRAFRRHLLQRSLKHASFLFRQ. Low complexity predominate over residues 1959–1979; that stretch reads PLGPPSSSSISSTSFPPSYDS. The segment at 1959–2016 is disordered; sequence PLGPPSSSSISSTSFPPSYDSVTRATSDNLQVRGSDYSHSEDLADFPPSPDRDRESIV. The interval 1974-1977 is interaction with NEDD4, NEDD4L and WWP2; that stretch reads PPSY. Positions 1981–1990 are enriched in polar residues; that stretch reads TRATSDNLQV.

Belongs to the sodium channel (TC 1.A.1.10) family. Nav1.5/SCN5A subfamily. In terms of assembly, cannot form the same regulatory interactions with beta subunits as other Navs do. Interacts with the PDZ domain of the syntrophin SNTA1, SNTB1 and SNTB2. Interacts with NEDD4, NEDD4L, WWP2 and GPD1L. Interacts with CALM. Interacts with FGF13; the interaction is direct and FGF13 may regulate SNC5A density at membranes and function. May also interact with FGF12 and FGF14. Interacts with TMEM233. Interacts with the spider Jingzhaotoxin-I (AC P83974, AC B1P1B7, AC B1P1B8). Interacts with ANK3. Interacts with PKP2 (via N-terminus). Interacts with XIRP2; the interaction is required for normal action potential configuration in the heart. Ubiquitinated by NEDD4L; which promotes its endocytosis. Does not seem to be ubiquitinated by NEDD4 or WWP2. In terms of processing, phosphorylation at Ser-1503 by PKC in a highly conserved cytoplasmic loop slows inactivation of the sodium channel and reduces peak sodium currents. Regulated through phosphorylation by CaMK2D. Post-translationally, lacks the cysteine which covalently binds the conotoxin GVIIJ. This cysteine (position 868) is speculated in other sodium channel subunits alpha to be implied in covalent binding with the sodium channel subunit beta-2 or beta-4. N-glycosylated at Asn-318, probably hinders potential interaction with regulatory subunits. Found in jejunal circular smooth muscle cells (at protein level). Expressed in human atrial and ventricular cardiac muscle but not in adult skeletal muscle, brain, myometrium, liver, or spleen. Isoform 4 is expressed in brain.

The protein localises to the cell membrane. It is found in the cytoplasm. Its subcellular location is the perinuclear region. The protein resides in the sarcolemma. It localises to the T-tubule. The protein localises to the cell junction. The catalysed reaction is Na(+)(in) = Na(+)(out). With respect to regulation, channel inactivation is regulated by intracellular calcium levels. It is a tetrodotoxin-resistant voltage-gated Na(+) channel (Nav). Functionally, pore-forming subunit of Nav1.5, a voltage-gated sodium (Nav) channel that directly mediates the depolarizing phase of action potentials in excitable membranes. Navs, also called VGSCs (voltage-gated sodium channels) or VDSCs (voltage-dependent sodium channels), operate by switching between closed and open conformations depending on the voltage difference across the membrane. In the open conformation they allow Na(+) ions to selectively pass through the pore, along their electrochemical gradient. The influx of Na(+) ions provokes membrane depolarization, initiating the propagation of electrical signals throughout cells and tissues. Nav1.5 is the predominant sodium channel expressed in myocardial cells and it is responsible for the initial upstroke of the action potential in cardiac myocytes, thereby initiating the heartbeat. Required for normal electrical conduction including formation of the infranodal ventricular conduction system and normal action potential configuration, as a result of its interaction with XIRP2. This Homo sapiens (Human) protein is Sodium channel protein type 5 subunit alpha.